The chain runs to 157 residues: SsrA-binding protein (157 aa).

The segment at 128 to 157 is disordered; sequence LARGKKQHDKRAAEKERDWEREKQRVMRRG. Basic and acidic residues predominate over residues 137–157; sequence KRAAEKERDWEREKQRVMRRG.

The protein belongs to the SmpB family.

It localises to the cytoplasm. Its function is as follows. Required for rescue of stalled ribosomes mediated by trans-translation. Binds to transfer-messenger RNA (tmRNA), required for stable association of tmRNA with ribosomes. tmRNA and SmpB together mimic tRNA shape, replacing the anticodon stem-loop with SmpB. tmRNA is encoded by the ssrA gene; the 2 termini fold to resemble tRNA(Ala) and it encodes a 'tag peptide', a short internal open reading frame. During trans-translation Ala-aminoacylated tmRNA acts like a tRNA, entering the A-site of stalled ribosomes, displacing the stalled mRNA. The ribosome then switches to translate the ORF on the tmRNA; the nascent peptide is terminated with the 'tag peptide' encoded by the tmRNA and targeted for degradation. The ribosome is freed to recommence translation, which seems to be the essential function of trans-translation. The protein is SsrA-binding protein of Methylococcus capsulatus (strain ATCC 33009 / NCIMB 11132 / Bath).